The primary structure comprises 614 residues: Nuclear receptor subfamily 1 group D member 1 (614 aa).

The segment covering 1 to 12 (MTTLDSNNNTGG) has biased composition (polar residues). The segment at 1–70 (MTTLDSNNNT…TQDPARSFGS (70 aa)) is required for phosphorylation by CSNK1E and cytoplasmic localization. Residues 1–119 (MTTLDSNNNT…SSRVSPSKST (119 aa)) are disordered. Residues 1–128 (MTTLDSNNNT…TSNITKLNGM (128 aa)) are modulating. Residues 14-34 (ITYIGSSGSSPSRTSPESLYS) are compositionally biased toward low complexity. The segment covering 35-48 (DNSNGSFQSLTQGC) has biased composition (polar residues). The segment at 49 to 284 (PTYFPPSPTG…PPRSPSPEPT (236 aa)) is crucial for activation of GJA1. S55 and S59 each carry phosphoserine; by GSK3-beta. Residues 69 to 102 (GSIPPSLSDDGSPSSSSSSSSSSSSFYNGSPPGS) are compositionally biased toward low complexity. A DNA-binding region (nuclear receptor) is located at residues 129-205 (VLLCKVCGDV…VGMSRDAVRF (77 aa)). NR C4-type zinc fingers lie at residues 132-152 (CKVCGDVASGFHYGVHACEGC) and 169-193 (CLKNENCSIVRINRNRCQQCRFKKC). K191 and K192 each carry N6-acetyllysine; by KAT5. Over residues 233-243 (SQCPLETSPTQ) the composition is skewed to polar residues. 2 disordered regions span residues 233–285 (SQCP…EPTV) and 311–345 (PGNFNANHASGSPPATTPHRWENQGCPPAPNDNNT). The segment covering 244-261 (HPTPGPMGPSPPPAPVPS) has biased composition (pro residues). T274 carries the phosphothreonine; by CDK1 modification. Positions 284 to 614 (TVEDVISQVA…KLLSFRVDAQ (331 aa)) constitute an NR LBD domain. The segment covering 311-324 (PGNFNANHASGSPP) has biased composition (polar residues). At K400 the chain carries N6-acetyllysine. Residue C418 coordinates heme. Position 591 is an N6-acetyllysine (K591). H602 is a heme binding site.

Belongs to the nuclear hormone receptor family. NR1 subfamily. Binds DNA as a monomer or a homodimer. Interacts with C1D, NR2E3 and SP1. Interacts with OPHN1 (via C-terminus). Interacts with ZNHIT1. Interacts with PER2; the interaction associates PER2 to BMAL1 promoter region. Interacts with CRY1. Interacts with CCAR2. Interacts with SIAH2. Interacts with CDK1. Interacts with FBXW7. Interacts with HUWE1. Interacts with NR0B2. Interacts with NFIL3. Interacts (via domain NR LBD) with HSP90AA1 and HSP90AB1. Post-translationally, ubiquitinated, leading to its proteasomal degradation. Ubiquitinated by SIAH2; leading to its proteasomal degradation. Ubiquitinated by the SCF(FBXW7) complex when phosphorylated by CDK1 leading to its proteasomal degradation. Rapidly ubiquitinated in response to inflammatory triggers and sumoylation is a prerequisite to its ubiquitination. In terms of processing, sumoylated by UBE2I, desumoylated by SENP1, and sumoylation is a prerequisite to its ubiquitination. Phosphorylated by CSNK1E; phosphorylation enhances its cytoplasmic localization. Post-translationally, undergoes lysosome-mediated degradation in a time-dependent manner in the liver. Widely expressed. Expressed at high levels in the liver, adipose tissue, skeletal muscle and brain. Also expressed in endothelial cells (ECs), vascular smooth muscle cells (VSMCs) and macrophages. Expression oscillates diurnally in the suprachiasmatic nucleus (SCN) of the hypothalamus as well as in peripheral tissues. Expression increases during the differentiation of pre-adipocytes into mature adipocytes. Expressed at high levels in some squamous carcinoma cell lines.

Its subcellular location is the nucleus. It is found in the cytoplasm. The protein localises to the cell projection. The protein resides in the dendrite. It localises to the dendritic spine. Transcriptional repressor which coordinates circadian rhythm and metabolic pathways in a heme-dependent manner. Integral component of the complex transcription machinery that governs circadian rhythmicity and forms a critical negative limb of the circadian clock by directly repressing the expression of core clock components BMAL1, CLOCK and CRY1. Also regulates genes involved in metabolic functions, including lipid and bile acid metabolism, adipogenesis, gluconeogenesis and the macrophage inflammatory response. Acts as a receptor for heme which stimulates its interaction with the NCOR1/HDAC3 corepressor complex, enhancing transcriptional repression. Recognizes two classes of DNA response elements within the promoter of its target genes and can bind to DNA as either monomers or homodimers, depending on the nature of the response element. Binds as a monomer to a response element composed of the consensus half-site motif 5'-[A/G]GGTCA-3' preceded by an A/T-rich 5' sequence (RevRE), or as a homodimer to a direct repeat of the core motif spaced by two nucleotides (RevDR-2). Acts as a potent competitive repressor of ROR alpha (RORA) function and regulates the levels of its ligand heme by repressing the expression of PPARGC1A, a potent inducer of heme synthesis. Regulates lipid metabolism by repressing the expression of APOC3 and by influencing the activity of sterol response element binding proteins (SREBPs); represses INSIG2 which interferes with the proteolytic activation of SREBPs which in turn govern the rhythmic expression of enzymes with key functions in sterol and fatty acid synthesis. Regulates gluconeogenesis via repression of G6PC1 and PEPCK and adipocyte differentiation via repression of PPARG. Regulates glucagon release in pancreatic alpha-cells via the AMPK-NAMPT-SIRT1 pathway and the proliferation, glucose-induced insulin secretion and expression of key lipogenic genes in pancreatic-beta cells. Positively regulates bile acid synthesis by increasing hepatic expression of CYP7A1 via repression of NR0B2 and NFIL3 which are negative regulators of CYP7A1. Modulates skeletal muscle oxidative capacity by regulating mitochondrial biogenesis and autophagy; controls mitochondrial biogenesis and respiration by interfering with the STK11-PRKAA1/2-SIRT1-PPARGC1A signaling pathway. Represses the expression of SERPINE1/PAI1, an important modulator of cardiovascular disease and the expression of inflammatory cytokines and chemokines in macrophages. Represses gene expression at a distance in macrophages by inhibiting the transcription of enhancer-derived RNAs (eRNAs). Plays a role in the circadian regulation of body temperature and negatively regulates thermogenic transcriptional programs in brown adipose tissue (BAT); imposes a circadian oscillation in BAT activity, increasing body temperature when awake and depressing thermogenesis during sleep. In concert with NR2E3, regulates transcriptional networks critical for photoreceptor development and function. In addition to its activity as a repressor, can also act as a transcriptional activator. In the ovarian granulosa cells acts as a transcriptional activator of STAR which plays a role in steroid biosynthesis. In collaboration with SP1, activates GJA1 transcription in a heme-independent manner. Represses the transcription of CYP2B10, CYP4A10 and CYP4A14. Represses the transcription of CES2. Represses and regulates the circadian expression of TSHB in a NCOR1-dependent manner. Negatively regulates the protein stability of NR3C1 and influences the time-dependent subcellular distribution of NR3C1, thereby affecting its transcriptional regulatory activity. Plays a critical role in the circadian control of neutrophilic inflammation in the lung; under resting, non-stress conditions, acts as a rhythmic repressor to limit inflammatory activity whereas in the presence of inflammatory triggers undergoes ubiquitin-mediated degradation thereby relieving inhibition of the inflammatory response. Plays a key role in the circadian regulation of microglial activation and neuroinflammation; suppresses microglial activation through the NF-kappaB pathway in the central nervous system. Plays a role in the regulation of the diurnal rhythms of lipid and protein metabolism in the skeletal muscle via transcriptional repression of genes controlling lipid and amino acid metabolism in the muscle. The sequence is that of Nuclear receptor subfamily 1 group D member 1 (NR1D1) from Homo sapiens (Human).